We begin with the raw amino-acid sequence, 285 residues long: Chromatin modification-related protein YNG2 (285 aa).

Positions 19–54 (LEVKHLLQELKNKDVQLQEARKRYQTKDNQIHKFIR) form a coiled coil. The segment covering 138 to 165 (NGLSDNLSGTTTPRGHSASTPVADNAAN) has biased composition (polar residues). Residues 138 to 218 (NGLSDNLSGT…SRPNEGPGNN (81 aa)) are disordered. The span at 193–207 (MKSEDFEDKKYDNDS) shows a compositional bias: basic and acidic residues. A PHD-type zinc finger spans residues 225–276 (NLYCFCQRVSFGEMIGCDNDDCKFEWFHWSCVGITAPPKDDEIWYCPDCAPK). Positions 228, 230, 241, 246, 252, 255, 270, and 273 each coordinate Zn(2+).

This sequence belongs to the ING family. Interacts with H3K4me3 and to a lesser extent with H3K4me2. Component of the NuA4 histone acetyltransferase complex.

The protein localises to the nucleus. Component of the NuA4 histone acetyltransferase complex which is involved in transcriptional activation of selected genes principally by acetylation of nucleosomal histone H4 and H2A. The NuA4 complex is also involved in DNA repair. Involved in cell cycle progression and meiosis. The polypeptide is Chromatin modification-related protein YNG2 (YNG2) (Debaryomyces hansenii (strain ATCC 36239 / CBS 767 / BCRC 21394 / JCM 1990 / NBRC 0083 / IGC 2968) (Yeast)).